Reading from the N-terminus, the 622-residue chain is 1-deoxy-D-xylulose-5-phosphate synthase (622 aa).

Residues His74 and 115–117 each bind thiamine diphosphate; that span reads GHS. Asp146 provides a ligand contact to Mg(2+). Thiamine diphosphate contacts are provided by residues 147–148, Asn175, Tyr286, and Glu366; that span reads GA. Asn175 serves as a coordination point for Mg(2+).

This sequence belongs to the transketolase family. DXPS subfamily. Homodimer. It depends on Mg(2+) as a cofactor. The cofactor is thiamine diphosphate.

It catalyses the reaction D-glyceraldehyde 3-phosphate + pyruvate + H(+) = 1-deoxy-D-xylulose 5-phosphate + CO2. It functions in the pathway metabolic intermediate biosynthesis; 1-deoxy-D-xylulose 5-phosphate biosynthesis; 1-deoxy-D-xylulose 5-phosphate from D-glyceraldehyde 3-phosphate and pyruvate: step 1/1. Its function is as follows. Catalyzes the acyloin condensation reaction between C atoms 2 and 3 of pyruvate and glyceraldehyde 3-phosphate to yield 1-deoxy-D-xylulose-5-phosphate (DXP). This Carboxydothermus hydrogenoformans (strain ATCC BAA-161 / DSM 6008 / Z-2901) protein is 1-deoxy-D-xylulose-5-phosphate synthase.